The sequence spans 269 residues: MERSQSRLSLSASFEALAIYFPCMNSFDDEDAADSRRLKGAIQRSTETGLAVEMPSRTLRQASHESIEDSMNSYGSEGNLNYGGVCLASDAQFSDFLGSMGPAQFVGRQTLATTPMGGVEIGLQERNGQLEVDIIQARGLTAKPGSKTLPAAYIKAYLLENGVCIAKKKTKVARKSLDPLYNQVLLFPESPQGKVLQVIVWGNYGRMERKQFMGVARVLLEELDLTTLAVGWYKLFPTSSMVDPATGPLLRQASQLSLESTVGPCGERS.

The C2 domain occupies 115-233 (PMGGVEIGLQ…DLTTLAVGWY (119 aa)). S254 and S257 each carry phosphoserine.

Binds PPFIA3. In terms of tissue distribution, brain specific.

It is found in the synapse. In terms of biological role, regulates synaptic membrane exocytosis. In Rattus norvegicus (Rat), this protein is Regulating synaptic membrane exocytosis protein 4 (Rims4).